A 337-amino-acid chain; its full sequence is DNA replication regulator sld2 (337 aa).

A phosphothreonine; by cdc2 mark is found at T60 and T74. A disordered region spans residues 71-97; the sequence is KFQTPTKQRAETEANESPKAPRNDYLQ. A Phosphoserine; by cdc2 modification is found at S87. Residues T99 and T154 each carry the phosphothreonine; by cdc2 modification. At S183 the chain carries Phosphoserine. Residues 258–302 form a disordered region; sequence SMNLSKSHLEGLPEIDEDAENGIDDNEDTTASKDSSPFLDLQSER. A compositionally biased stretch (acidic residues) spans 270 to 285; the sequence is PEIDEDAENGIDDNED.

It belongs to the SLD2 family. Interacts with rad4. Post-translationally, phosphorylated by cdc2 at the onset of S-phase.

It localises to the cytoplasm. The protein resides in the nucleus. Functionally, has a role in the initiation of DNA replication. Required at S-phase checkpoint. The protein is DNA replication regulator sld2 (drc1) of Schizosaccharomyces pombe (strain 972 / ATCC 24843) (Fission yeast).